Here is a 204-residue protein sequence, read N- to C-terminus: Large ribosomal subunit protein uL4 (204 aa).

Residues 44 to 76 (KRQGTQSAKTRSEVRGGGIKPWRQKGTGRARQG) form a disordered region.

It belongs to the universal ribosomal protein uL4 family. As to quaternary structure, part of the 50S ribosomal subunit.

Its function is as follows. One of the primary rRNA binding proteins, this protein initially binds near the 5'-end of the 23S rRNA. It is important during the early stages of 50S assembly. It makes multiple contacts with different domains of the 23S rRNA in the assembled 50S subunit and ribosome. Functionally, forms part of the polypeptide exit tunnel. The protein is Large ribosomal subunit protein uL4 of Clostridium perfringens (strain ATCC 13124 / DSM 756 / JCM 1290 / NCIMB 6125 / NCTC 8237 / Type A).